Here is a 103-residue protein sequence, read N- to C-terminus: uncharacterized protein (103 aa).

A disordered region spans residues 1 to 103 (MAGARRRARC…WRGGSCTSQR (103 aa)). Positions 35-44 (GSGQPRWWPW) are enriched in low complexity. Composition is skewed to basic residues over residues 55 to 65 (RRPGPGRRARS) and 74 to 84 (RPPHSRTRARR).

Belongs to the epstein-barr virus RPMS1 family.

This is an uncharacterized protein from Homo sapiens (Human).